We begin with the raw amino-acid sequence, 127 residues long: Anti-adapter protein IraD (127 aa).

Belongs to the GpW/Gp25 family. IraD subfamily. In terms of assembly, interacts with RssB.

Its subcellular location is the cytoplasm. In terms of biological role, inhibits RpoS proteolysis by regulating RssB activity, thereby increasing the stability of the sigma stress factor RpoS during oxidative stress. Its effect on RpoS stability is due to its interaction with RssB, which probably blocks the interaction of RssB with RpoS, and the consequent delivery of the RssB-RpoS complex to the ClpXP protein degradation pathway. The chain is Anti-adapter protein IraD from Escherichia coli (strain SMS-3-5 / SECEC).